The primary structure comprises 70 residues: Peptide BmKn2 (70 aa).

An N-terminal signal peptide occupies residues 1 to 23 (MKSQTFFLLFLVVLLLAISQSEA). Position 36 is a phenylalanine amide (Phe36). Residues 40-70 (SMRDMDTMKYLYDPSLSAADLKTLQKLMENY) constitute a propeptide that is removed on maturation.

This sequence belongs to the non-disulfide-bridged peptide (NDBP) superfamily. Short antimicrobial peptide (group 4) family. As to expression, expressed by the venom gland.

It localises to the secreted. It is found in the target cell membrane. In terms of biological role, antimicrobial peptide with potent activity against bacteria. Has strong antibacterial activity against Gram-positive bacteria S.aureus, M.luteus, B.subtilis, and Gram-negative bacteria E.coli, P.aeruginosa and N.gonorrhoeae. Also shows low activity against HIV-1 PV. The chain is Peptide BmKn2 from Olivierus martensii (Manchurian scorpion).